Here is a 777-residue protein sequence, read N- to C-terminus: C6 finger domain transcription factor adaR (777 aa).

Residues 1-20 (MEQRSSPARSLPPRKTTTTP) are disordered. The segment at residues 24-50 (CELCRKRKVKCDKLTPCTNCAASGTVC) is a DNA-binding region (zn(2)-C6 fungal-type). 6 disordered regions span residues 61–85 (GRHA…TDRI), 111–144 (NSHS…NPNT), 182–213 (SSLA…VLGL), 419–440 (PQHI…PNRE), 468–496 (RKVD…DPSW), and 655–699 (LPPS…PTGS). A compositionally biased stretch (low complexity) spans 475-489 (PTPTSSTSGTSTSRS). Positions 668–677 (ATPPTFPGVP) are enriched in pro residues.

Its subcellular location is the nucleus. Functionally, transcription factor that specifically regulates the expression of the ada gene cluster involved in the biosynthesis of the linear tetracyclic TAN-1612 neuropeptide Y receptor antagonist. This is C6 finger domain transcription factor adaR from Aspergillus niger (strain ATCC MYA-4892 / CBS 513.88 / FGSC A1513).